A 1035-amino-acid polypeptide reads, in one-letter code: DNA polymerase I B, mitochondrial (1035 aa).

Residues 1–42 (MAVAPPLPPAPARLLRRWQGSSPWLSSSFGRTRYFSRPAFAA) constitute a mitochondrion transit peptide. The segment at 100-124 (TNGTTPLRVGNLRHDPSEDIRSSNY) is disordered. The span at 111–120 (LRHDPSEDIR) shows a compositional bias: basic and acidic residues. A 3'-5' exonuclease domain is found at 317 to 478 (FGNGKTCIWV…LYESLKNKLE (162 aa)). The interval 699–1032 (HAIAALCEVF…VDAKYAKSWY (334 aa)) is polymerase.

Belongs to the DNA polymerase type-A family.

The protein resides in the mitochondrion. It catalyses the reaction DNA(n) + a 2'-deoxyribonucleoside 5'-triphosphate = DNA(n+1) + diphosphate. Its activity is regulated as follows. Not inhibited by aphidicolin. Its function is as follows. In addition to polymerase activity, this DNA polymerase exhibits 5'-3' exonuclease activity. May be required for DNA replication and accumulation in mitochondria. This Oryza sativa subsp. japonica (Rice) protein is DNA polymerase I B, mitochondrial.